A 273-amino-acid chain; its full sequence is Type III pantothenate kinase (273 aa).

7–14 (DVGNTAIK) provides a ligand contact to ATP. Substrate is bound by residues phenylalanine 119 and 124-127 (GIDR). Residue aspartate 126 is the Proton acceptor of the active site. Aspartate 146 contributes to the K(+) binding site. Threonine 149 is an ATP binding site. Residue threonine 206 participates in substrate binding.

This sequence belongs to the type III pantothenate kinase family. As to quaternary structure, homodimer. The cofactor is NH4(+). K(+) serves as cofactor.

The protein resides in the cytoplasm. The catalysed reaction is (R)-pantothenate + ATP = (R)-4'-phosphopantothenate + ADP + H(+). It functions in the pathway cofactor biosynthesis; coenzyme A biosynthesis; CoA from (R)-pantothenate: step 1/5. Its function is as follows. Catalyzes the phosphorylation of pantothenate (Pan), the first step in CoA biosynthesis. This chain is Type III pantothenate kinase, found in Rhodopirellula baltica (strain DSM 10527 / NCIMB 13988 / SH1).